A 705-amino-acid chain; its full sequence is Calpastatin (705 aa).

Disordered stretches follow at residues methionine 1–alanine 211 and leucine 226–proline 493. 2 stretches are compositionally biased toward basic and acidic residues: residues lysine 7–proline 17 and valine 24–valine 62. Lysine 10 is covalently cross-linked (Glycyl lysine isopeptide (Lys-Gly) (interchain with G-Cter in SUMO2)). Lysine 28 is modified (N6-acetyllysine). Low complexity-rich tracts occupy residues serine 63 to glutamate 72 and proline 94 to glutamate 103. The residue at position 65 (serine 65) is a Phosphoserine. Threonine 115 bears the Phosphothreonine mark. Positions threonine 135–lysine 151 are enriched in acidic residues. Residues glutamate 149–serine 202 form an Inhibitory domain 1 repeat. Positions glutamate 173–glycine 194 are enriched in basic and acidic residues. Phosphoserine is present on residues serine 202 and serine 230. The span at aspartate 234–leucine 248 shows a compositional bias: basic and acidic residues. Residues threonine 275–leucine 286 show a composition bias toward polar residues. Composition is skewed to basic and acidic residues over residues arginine 289–glycine 317 and tyrosine 327–serine 352. The stretch at glutamate 292 to alanine 344 is one Inhibitory domain 2 repeat. A phosphoserine mark is found at serine 352, serine 354, and serine 361. Residues glutamate 355–phenylalanine 364 show a composition bias toward acidic residues. Basic and acidic residues predominate over residues aspartate 365–glutamate 381. Serine 428 bears the Phosphoserine mark. Residues proline 430–glutamate 489 show a composition bias toward basic and acidic residues. Residues alanine 434–valine 487 form an Inhibitory domain 3 repeat. A phosphoserine mark is found at serine 504 and serine 515. The segment at valine 527 to serine 705 is disordered. Residues glutamine 533–alanine 542 are compositionally biased toward low complexity. At serine 563 the chain carries Phosphoserine. An Inhibitory domain 4 repeat occupies proline 571 to glutamine 624. Over residues proline 571 to arginine 625 the composition is skewed to basic and acidic residues. Low complexity predominate over residues aspartate 651 to aspartate 662. Basic and acidic residues predominate over residues lysine 683 to serine 705.

This sequence belongs to the protease inhibitor I27 (calpastatin) family.

In terms of biological role, specific inhibition of calpain (calcium-dependent cysteine protease). Plays a key role in postmortem tenderization of meat and have been proposed to be involved in muscle protein degradation in living tissue. In Bos taurus (Bovine), this protein is Calpastatin (CAST).